The primary structure comprises 348 residues: Dihydroorotase (348 aa).

H14 and H16 together coordinate Zn(2+). Substrate contacts are provided by residues 16–18 (HLR) and N42. Residues K100, H137, and H175 each coordinate Zn(2+). An N6-carboxylysine modification is found at K100. H137 lines the substrate pocket. Residue L220 participates in substrate binding. D248 is a binding site for Zn(2+). D248 is an active-site residue. Substrate-binding residues include H252 and A264.

This sequence belongs to the metallo-dependent hydrolases superfamily. DHOase family. Class II DHOase subfamily. Homodimer. Zn(2+) is required as a cofactor.

It carries out the reaction (S)-dihydroorotate + H2O = N-carbamoyl-L-aspartate + H(+). Its pathway is pyrimidine metabolism; UMP biosynthesis via de novo pathway; (S)-dihydroorotate from bicarbonate: step 3/3. Catalyzes the reversible cyclization of carbamoyl aspartate to dihydroorotate. The chain is Dihydroorotase from Azotobacter vinelandii (strain DJ / ATCC BAA-1303).